The primary structure comprises 666 residues: E3 ubiquitin-protein ligase MBR2 (666 aa).

Polar residues-rich tracts occupy residues 1-14 (MQGP…STGI), 23-35 (CSTN…NNIL), 42-58 (FPNN…ASSS), and 73-88 (SSSR…SNGS). Disordered regions lie at residues 1-58 (MQGP…ASSS), 73-95 (SSSR…RQLL), 155-179 (SLGS…GLGS), 221-329 (SSLS…DGQP), 400-433 (NPST…TPHN), and 457-491 (GASL…RQRR). A compositionally biased stretch (low complexity) spans 221-239 (SSLSLSMPSQNSPNVNNQS). 3 stretches are compositionally biased toward polar residues: residues 258 to 268 (AFPSTRSTETI), 286 to 303 (FSFT…QLPA), and 414 to 433 (GSSS…TPHN). The segment at 619–660 (CCVCQEEYAEGDDLGTLGCGHEFHTACVKQWLMLKNLCPICK) adopts an RING-type; atypical zinc-finger fold.

Belongs to the RING-type zinc finger family. As to quaternary structure, interacts with MED25 and UBC11.

The enzyme catalyses S-ubiquitinyl-[E2 ubiquitin-conjugating enzyme]-L-cysteine + [acceptor protein]-L-lysine = [E2 ubiquitin-conjugating enzyme]-L-cysteine + N(6)-ubiquitinyl-[acceptor protein]-L-lysine.. It participates in protein modification; protein ubiquitination. E3 ubiquitin-protein ligase that functions as a regulator of MED25 stability by targeting MED25 for degradation in a RING-H2-dependent way. Proteasome-dependent degradation of MED25 seems to activate its function as positive regulator of FLOWERING LOCUS T (FT) and is important to induce the expression of FT and consequently to promote flowering. May function downstream of HAL3 and be required for HAL3-regulated plant growth. Activation of MBR2 by HAL3 may lead to the degradation of cell cycle suppressors, resulting in enhancement of cell division and plant growth. This is E3 ubiquitin-protein ligase MBR2 (MBR2) from Arabidopsis thaliana (Mouse-ear cress).